The following is a 61-amino-acid chain: Large ribosomal subunit protein bL32 (61 aa).

Basic residues predominate over residues 1–16; the sequence is MAVPRRKTSPSRRGMR. Residues 1–61 form a disordered region; sequence MAVPRRKTSP…RQVLKAKSDS (61 aa). Residues 27–44 are compositionally biased toward basic and acidic residues; it reads YAEDKDSGELRRPHHLDL.

It belongs to the bacterial ribosomal protein bL32 family.

The polypeptide is Large ribosomal subunit protein bL32 (Nitrobacter winogradskyi (strain ATCC 25391 / DSM 10237 / CIP 104748 / NCIMB 11846 / Nb-255)).